The sequence spans 99 residues: UPF0386 protein mll0189 (99 aa).

Belongs to the UPF0386 family.

The protein is UPF0386 protein mll0189 of Mesorhizobium japonicum (strain LMG 29417 / CECT 9101 / MAFF 303099) (Mesorhizobium loti (strain MAFF 303099)).